Reading from the N-terminus, the 573-residue chain is DNA ligase (573 aa).

Residue Glu250 coordinates ATP. Residue Lys252 is the N6-AMP-lysine intermediate of the active site. 6 residues coordinate ATP: Arg257, Arg272, Glu301, Phe342, Arg432, and Lys438.

It belongs to the ATP-dependent DNA ligase family. The cofactor is Mg(2+).

The catalysed reaction is ATP + (deoxyribonucleotide)n-3'-hydroxyl + 5'-phospho-(deoxyribonucleotide)m = (deoxyribonucleotide)n+m + AMP + diphosphate.. Its function is as follows. DNA ligase that seals nicks in double-stranded DNA during DNA replication, DNA recombination and DNA repair. This is DNA ligase from Methanococcus maripaludis (strain C5 / ATCC BAA-1333).